Reading from the N-terminus, the 651-residue chain is MTFLIKRETQVDQILRDIRAVVNQMVPKEAKITEIEFEGPELVIYVKNPEAIMKDGELIKDLAKVLKKRISVRPDPEVLLPPEEAEKLIFEIVPKEAEITNIAFDPSVGEVLIEAKKPGLVIGKNGETLRLITQKVKWAPKVVRTPPLQSQTIYSIRQILQTESKDRRKFLRQVGRNIYRKPEYKSRWIRITGLGGFREVGRSALLVQTDESFVLVDFGVNVAMLNDPYKAFPHFDAPEFQYVLREGLLDAIIITHAHLDHCGMLPYLFRYNLFDGPIYTTPPTRDLMVLLQKDFIEIQQSNGQDPLYRPRDIKEVIKHTITLDYGEVRDISPDIRLTLHNAGHILGSAIVHLHIGNGLHNIAITGDFKFIPTRLLEPANAKFPRLETLVMESTYGGANDIQMPREEAEKRLIEVIHNTIKRGGKVLIPAMAVGRAQEVMMVLEEYARIGGIEVPIYLDGMIWEATAIHTAYPEYLSRRLREQIFKEGYNPFLSEIFHPVANSRERQDIIDSNEPAIIIASSGMLVGGPSVEYFKQLAPDPKNSIIFVSYQAEGTLGRQVQSGIREIPMVGEEGRTEVIKVNMEVHTIDGFSGHADRRELMNYVAKVRPRPERIITVHGEPQKCLDLATSIHRKFGISTRAPNNLDTIRLR.

The interval 1–200 (MTFLIKRETQ…ITGLGGFREV (200 aa)) is archaeal CPSF-KH domain. A KHa region spans residues 12 to 79 (DQILRDIRAV…ISVRPDPEVL (68 aa)). Positions 80–147 (LPPEEAEKLI…WAPKVVRTPP (68 aa)) are KHb. The segment at 188-398 (WIRITGLGGF…LVMESTYGGA (211 aa)) is metallo-beta-lactamase N-terminus. 6 residues coordinate Zn(2+): His256, His258, Asp260, His261, His344, and Asp367. A beta-Casp region spans residues 399 to 592 (NDIQMPREEA…MEVHTIDGFS (194 aa)). The interval 593 to 651 (GHADRRELMNYVAKVRPRPERIITVHGEPQKCLDLATSIHRKFGISTRAPNNLDTIRLR) is metallo-beta-lactamase C-terminus. His618 provides a ligand contact to Zn(2+).

The protein belongs to the metallo-beta-lactamase superfamily. RNA-metabolizing metallo-beta-lactamase-like family. FttA subfamily. Homodimer. Interacts with RNA polymerase (RNAP), interacts with the Spt4-Spt5 complex. It depends on Zn(2+) as a cofactor.

In terms of biological role, terminates transcription on the whole genome. Termination is linked to FttA-mediated RNA cleavage and does not require NTP hydrolysis. Cleaves endonucleolytically at the RNA exit channel of RNA polymerase (RNAP); the 5'-3' exonuclease activity of this protein degrades the nascent RNA released from RNAP. Functionally, has nuclease activity on single-stranded RNA. The chain is Transcription termination factor FttA from Pyrococcus horikoshii (strain ATCC 700860 / DSM 12428 / JCM 9974 / NBRC 100139 / OT-3).